A 597-amino-acid polypeptide reads, in one-letter code: Probable methyltransferase-like protein 25 (597 aa).

A compositionally biased stretch (basic and acidic residues) spans 245 to 254 (ECKGDAESVQ). 2 disordered regions span residues 245-265 (ECKGDAESVQRSRLGNPDLSA) and 317-342 (TSSQVQNTEKSGLRKERRNTASKARD). Residues 317 to 326 (TSSQVQNTEK) are compositionally biased toward polar residues.

Its function is as follows. Probable methyltransferase. The sequence is that of Probable methyltransferase-like protein 25 (Mettl25) from Mus musculus (Mouse).